Here is a 393-residue protein sequence, read N- to C-terminus: Alpha-pyrone synthesis polyketide synthase-like Pks18 (393 aa).

Positions 1 to 26 are disordered; sequence MNVSAESGAPRRAGQRHEVGLAQLPP. The active-site Nucleophile is the cysteine 175. Histidine 221 contacts substrate.

It belongs to the thiolase-like superfamily. Chalcone/stilbene synthases family. As to quaternary structure, homodimer.

Its pathway is lipid metabolism; fatty acid biosynthesis. In terms of biological role, involved in the biosynthesis of tri- and tetraketide alpha-pyrones. Pks18 catalyzes the extension of medium- and long-chain aliphatic acyl-CoA substrates by using malonyl-CoA as an extender molecule to synthesize polyketide products. The chain is Alpha-pyrone synthesis polyketide synthase-like Pks18 (pks18) from Mycobacterium bovis (strain ATCC BAA-935 / AF2122/97).